The following is a 278-amino-acid chain: Digeranylgeranylglyceryl phosphate synthase (278 aa).

The next 8 membrane-spanning stretches (helical) occupy residues 15 to 35 (VIGS…WKIV), 36 to 56 (PIKL…GYII), 89 to 109 (IVLF…AFII), 133 to 153 (LIVA…FFEG), 159 to 179 (TLIP…VKGI), 203 to 223 (WFIS…PYFF), 225 to 245 (FNII…LVVL), and 258 to 278 (AYMK…TLPI).

It belongs to the UbiA prenyltransferase family. DGGGP synthase subfamily. It depends on Mg(2+) as a cofactor.

Its subcellular location is the cell membrane. It carries out the reaction sn-3-O-(geranylgeranyl)glycerol 1-phosphate + (2E,6E,10E)-geranylgeranyl diphosphate = 2,3-bis-O-(geranylgeranyl)-sn-glycerol 1-phosphate + diphosphate. It participates in membrane lipid metabolism; glycerophospholipid metabolism. Its function is as follows. Prenyltransferase that catalyzes the transfer of the geranylgeranyl moiety of geranylgeranyl diphosphate (GGPP) to the C2 hydroxyl of (S)-3-O-geranylgeranylglyceryl phosphate (GGGP). This reaction is the second ether-bond-formation step in the biosynthesis of archaeal membrane lipids. The sequence is that of Digeranylgeranylglyceryl phosphate synthase from Sulfurisphaera tokodaii (strain DSM 16993 / JCM 10545 / NBRC 100140 / 7) (Sulfolobus tokodaii).